A 296-amino-acid chain; its full sequence is 4-hydroxybenzoate octaprenyltransferase (296 aa).

8 helical membrane passes run 29 to 49 (IGIYLLLWPTLWSLWIAADGV), 55 to 75 (LLIFVLGVILMRAAGCVINDF), 102 to 122 (AWITFAVLVALSFGLVLLTNA), 146 to 166 (YYPQVVLGAAYSWGILMAFTA), 169 to 189 (GELPASAWLLFLANVLWTVAY), 219 to 239 (LIIGSLQGLTLLLLVLAGNRF), 241 to 261 (LGLCFYLGLAVAAACFVWEAW), and 275 to 295 (FLHNHWAGLAIFLGTVADYAL).

Belongs to the UbiA prenyltransferase family. Requires Mg(2+) as cofactor.

The protein localises to the cell inner membrane. The catalysed reaction is all-trans-octaprenyl diphosphate + 4-hydroxybenzoate = 4-hydroxy-3-(all-trans-octaprenyl)benzoate + diphosphate. It functions in the pathway cofactor biosynthesis; ubiquinone biosynthesis. Its function is as follows. Catalyzes the prenylation of para-hydroxybenzoate (PHB) with an all-trans polyprenyl group. Mediates the second step in the final reaction sequence of ubiquinone-8 (UQ-8) biosynthesis, which is the condensation of the polyisoprenoid side chain with PHB, generating the first membrane-bound Q intermediate 3-octaprenyl-4-hydroxybenzoate. This Pseudomonas aeruginosa (strain LESB58) protein is 4-hydroxybenzoate octaprenyltransferase.